The primary structure comprises 151 residues: Ribonuclease H (151 aa).

The RNase H type-1 domain maps to Ser2–Val143. Positions 11, 49, 71, and 135 each coordinate Mg(2+).

The protein belongs to the RNase H family. In terms of assembly, monomer. The cofactor is Mg(2+).

The protein resides in the cytoplasm. It catalyses the reaction Endonucleolytic cleavage to 5'-phosphomonoester.. Endonuclease that specifically degrades the RNA of RNA-DNA hybrids. The polypeptide is Ribonuclease H (Stutzerimonas stutzeri (strain A1501) (Pseudomonas stutzeri)).